Consider the following 154-residue polypeptide: Large ribosomal subunit protein uL22 (154 aa).

Belongs to the universal ribosomal protein uL22 family. Part of the 50S ribosomal subunit.

This protein binds specifically to 23S rRNA. It makes multiple contacts with different domains of the 23S rRNA in the assembled 50S subunit and ribosome. Functionally, the globular domain of the protein is located near the polypeptide exit tunnel on the outside of the subunit, while an extended beta-hairpin is found that lines the wall of the exit tunnel in the center of the 70S ribosome. The chain is Large ribosomal subunit protein uL22 from Methanosphaera stadtmanae (strain ATCC 43021 / DSM 3091 / JCM 11832 / MCB-3).